The chain runs to 486 residues: E3 ubiquitin-protein ligase TRIM58 (486 aa).

The RING-type zinc finger occupies 16–61; it reads CPVCLDFLQEPVSVDCGHSFCLRCISEFCEKSDGAQGGVYACPQCR. The B box-type zinc finger occupies 91 to 132; it reads PGARRCARHGEDLSRFCEEDEAALCWVCDAGPEHRTHRTAPL. Zn(2+) is bound by residues cysteine 96, histidine 99, cysteine 118, and histidine 124. Residues 193–242 are a coiled coil; sequence LAQEEQRQLRRLEAEERATLQRLRESKSRLVQQSKALKELADELQERCQR. One can recognise a B30.2/SPRY domain in the interval 273 to 463; sequence LKTACCIPGR…TPLILPPTTI (191 aa).

It belongs to the TRIM/RBCC family. As to expression, expressed in erythroblasts.

It catalyses the reaction S-ubiquitinyl-[E2 ubiquitin-conjugating enzyme]-L-cysteine + [acceptor protein]-L-lysine = [E2 ubiquitin-conjugating enzyme]-L-cysteine + N(6)-ubiquitinyl-[acceptor protein]-L-lysine.. It functions in the pathway protein modification; protein ubiquitination. In terms of biological role, E3 ubiquitin ligase induced during late erythropoiesis. Directly binds and ubiquitinates the intermediate chain of the microtubule motor dynein (DYNC1LI1/DYNC1LI2), stimulating the degradation of the dynein holoprotein complex. May participate in the erythroblast enucleation process through regulation of nuclear polarization. This Homo sapiens (Human) protein is E3 ubiquitin-protein ligase TRIM58 (TRIM58).